The chain runs to 333 residues: Holliday junction branch migration complex subunit RuvB (333 aa).

Positions 1–182 are large ATPase domain (RuvB-L); that stretch reads MDERLLSGES…FGVLSRLEYY (182 aa). ATP is bound by residues leucine 21, arginine 22, glycine 63, lysine 66, threonine 67, threonine 68, 129 to 131, arginine 172, tyrosine 182, and arginine 219; that span reads EDF. A Mg(2+)-binding site is contributed by threonine 67. The interval 183–253 is small ATPAse domain (RuvB-S); that stretch reads TVDQLSAIVE…ITQMALELLQ (71 aa). Residues 256-333 form a head domain (RuvB-H) region; the sequence is KLGLDHIDHK…EHFGMEMPKV (78 aa). The DNA site is built by arginine 311 and arginine 316.

This sequence belongs to the RuvB family. In terms of assembly, homohexamer. Forms an RuvA(8)-RuvB(12)-Holliday junction (HJ) complex. HJ DNA is sandwiched between 2 RuvA tetramers; dsDNA enters through RuvA and exits via RuvB. An RuvB hexamer assembles on each DNA strand where it exits the tetramer. Each RuvB hexamer is contacted by two RuvA subunits (via domain III) on 2 adjacent RuvB subunits; this complex drives branch migration. In the full resolvosome a probable DNA-RuvA(4)-RuvB(12)-RuvC(2) complex forms which resolves the HJ.

The protein resides in the cytoplasm. The catalysed reaction is ATP + H2O = ADP + phosphate + H(+). Functionally, the RuvA-RuvB-RuvC complex processes Holliday junction (HJ) DNA during genetic recombination and DNA repair, while the RuvA-RuvB complex plays an important role in the rescue of blocked DNA replication forks via replication fork reversal (RFR). RuvA specifically binds to HJ cruciform DNA, conferring on it an open structure. The RuvB hexamer acts as an ATP-dependent pump, pulling dsDNA into and through the RuvAB complex. RuvB forms 2 homohexamers on either side of HJ DNA bound by 1 or 2 RuvA tetramers; 4 subunits per hexamer contact DNA at a time. Coordinated motions by a converter formed by DNA-disengaged RuvB subunits stimulates ATP hydrolysis and nucleotide exchange. Immobilization of the converter enables RuvB to convert the ATP-contained energy into a lever motion, pulling 2 nucleotides of DNA out of the RuvA tetramer per ATP hydrolyzed, thus driving DNA branch migration. The RuvB motors rotate together with the DNA substrate, which together with the progressing nucleotide cycle form the mechanistic basis for DNA recombination by continuous HJ branch migration. Branch migration allows RuvC to scan DNA until it finds its consensus sequence, where it cleaves and resolves cruciform DNA. This Bacillus cereus (strain Q1) protein is Holliday junction branch migration complex subunit RuvB.